The chain runs to 564 residues: Beta-hexosaminidase subunit B2 (564 aa).

The signal sequence occupies residues 1–19 (MKLKFIFLILFFIIGNSIG). N-linked (GlcNAc...) asparagine glycosylation is found at Asn43, Asn84, Asn303, and Asn347. Glu357 serves as the catalytic Proton donor. Residues Asn364, Asn377, Asn439, Asn524, and Asn551 are each glycosylated (N-linked (GlcNAc...) asparagine).

This sequence belongs to the glycosyl hydrolase 20 family.

The protein localises to the lysosome. It catalyses the reaction Hydrolysis of terminal non-reducing N-acetyl-D-hexosamine residues in N-acetyl-beta-D-hexosaminides.. In terms of biological role, responsible for the degradation of GM2 gangliosides, and a variety of other molecules containing terminal N-acetyl hexosamines. This is Beta-hexosaminidase subunit B2 (hexb2) from Dictyostelium discoideum (Social amoeba).